Reading from the N-terminus, the 254-residue chain is Sec-independent protein translocase protein TatCy (254 aa).

6 helical membrane passes run 24-44, 67-87, 112-132, 157-177, 187-207, and 212-232; these read IVALAFVVFFIAGFFLAKPII, LYVFMQFAFIIGIVLTSPVIL, VSILLFLAGLSFSYYILFPFV, FLLQLTIPFGLLFQMPVILMF, MFLAKIRKYAYFTLLVIAALI, and LLSHMMVTVPLLILYEISILI.

It belongs to the TatC family. In terms of assembly, forms a complex with TatAy. Two types of complexes exist: one composed of TatAy and TatCy, and another composed only of TatAy.

It localises to the cell membrane. Its function is as follows. Part of the twin-arginine translocation (Tat) system that transports large folded proteins containing a characteristic twin-arginine motif in their signal peptide across membranes. Required for YwbN secretion. This is Sec-independent protein translocase protein TatCy from Bacillus subtilis (strain 168).